An 82-amino-acid polypeptide reads, in one-letter code: Acyl carrier protein (82 aa).

A Carrier domain is found at Ser-3–Gln-81. Ser-41 is modified (O-(pantetheine 4'-phosphoryl)serine).

The protein belongs to the acyl carrier protein (ACP) family. 4'-phosphopantetheine is transferred from CoA to a specific serine of apo-ACP by AcpS. This modification is essential for activity because fatty acids are bound in thioester linkage to the sulfhydryl of the prosthetic group.

Its subcellular location is the cytoplasm. Its pathway is lipid metabolism; fatty acid biosynthesis. In terms of biological role, carrier of the growing fatty acid chain in fatty acid biosynthesis. The protein is Acyl carrier protein of Beutenbergia cavernae (strain ATCC BAA-8 / DSM 12333 / CCUG 43141 / JCM 11478 / NBRC 16432 / NCIMB 13614 / HKI 0122).